Reading from the N-terminus, the 388-residue chain is Succinate--CoA ligase [ADP-forming] subunit beta (388 aa).

Residues 9–244 (KQLFAEFGLP…PSQEDEREAH (236 aa)) form the ATP-grasp domain. ATP-binding positions include lysine 46, 53–55 (GRG), glutamate 99, serine 102, and glutamate 107. Residues asparagine 199 and aspartate 213 each coordinate Mg(2+). Residues asparagine 264 and 321–323 (GIV) each bind substrate.

It belongs to the succinate/malate CoA ligase beta subunit family. In terms of assembly, heterotetramer of two alpha and two beta subunits. Mg(2+) is required as a cofactor.

The enzyme catalyses succinate + ATP + CoA = succinyl-CoA + ADP + phosphate. The catalysed reaction is GTP + succinate + CoA = succinyl-CoA + GDP + phosphate. It participates in carbohydrate metabolism; tricarboxylic acid cycle; succinate from succinyl-CoA (ligase route): step 1/1. Its function is as follows. Succinyl-CoA synthetase functions in the citric acid cycle (TCA), coupling the hydrolysis of succinyl-CoA to the synthesis of either ATP or GTP and thus represents the only step of substrate-level phosphorylation in the TCA. The beta subunit provides nucleotide specificity of the enzyme and binds the substrate succinate, while the binding sites for coenzyme A and phosphate are found in the alpha subunit. This Vibrio parahaemolyticus serotype O3:K6 (strain RIMD 2210633) protein is Succinate--CoA ligase [ADP-forming] subunit beta.